The primary structure comprises 101 residues: Urease subunit beta (101 aa).

The protein belongs to the urease beta subunit family. As to quaternary structure, heterotrimer of UreA (gamma), UreB (beta) and UreC (alpha) subunits. Three heterotrimers associate to form the active enzyme.

It is found in the cytoplasm. The enzyme catalyses urea + 2 H2O + H(+) = hydrogencarbonate + 2 NH4(+). The protein operates within nitrogen metabolism; urea degradation; CO(2) and NH(3) from urea (urease route): step 1/1. The sequence is that of Urease subunit beta from Pseudomonas paraeruginosa (strain DSM 24068 / PA7) (Pseudomonas aeruginosa (strain PA7)).